The following is a 334-amino-acid chain: GTPase Obg (334 aa).

In terms of domain architecture, Obg spans 1–159; the sequence is MKFIDQAIIH…RDIQLELMLL (159 aa). The segment at 67 to 86 is disordered; it reads AQNGQNGSSRKSSGKKGDDI. The span at 68-77 shows a compositional bias: low complexity; it reads QNGQNGSSRK. Residues 160–333 form the OBG-type G domain; sequence ADVGTLGMPN…LCSDITKYLK (174 aa). GTP contacts are provided by residues 166 to 173, 191 to 195, 213 to 216, 283 to 286, and 314 to 316; these read GMPNVGKS, FTTLH, DIPG, NKID, and SSM. Positions 173 and 193 each coordinate Mg(2+).

This sequence belongs to the TRAFAC class OBG-HflX-like GTPase superfamily. OBG GTPase family. As to quaternary structure, monomer. It depends on Mg(2+) as a cofactor.

Its subcellular location is the cytoplasm. Its function is as follows. An essential GTPase which binds GTP, GDP and possibly (p)ppGpp with moderate affinity, with high nucleotide exchange rates and a fairly low GTP hydrolysis rate. Plays a role in control of the cell cycle, stress response, ribosome biogenesis and in those bacteria that undergo differentiation, in morphogenesis control. The protein is GTPase Obg of Buchnera aphidicola subsp. Acyrthosiphon pisum (strain 5A).